The following is a 129-amino-acid chain: Dynein 14 kDa light chain, flagellar outer arm (129 aa).

One can recognise a Thioredoxin domain in the interval 2–109 (AFITEIANEA…LNRIVTELSG (108 aa)). A disulfide bond links cysteine 34 and cysteine 37. The segment at 107–129 (LSGKNPPPAAPAAAPAAPAAEAS) is disordered. Residues 117–129 (PAAAPAAPAAEAS) show a composition bias toward low complexity.

In terms of assembly, consists of at least 3 heavy chains (alpha, beta and gamma), 2 intermediate chains and 8 light chains.

The protein localises to the cell projection. Its subcellular location is the cilium. It is found in the flagellum. The protein resides in the cytoplasm. It localises to the cytoskeleton. The protein localises to the flagellum axoneme. Functionally, may be involved in regulating the redox state of functionally important thiol groups within dynein. In Chlamydomonas reinhardtii (Chlamydomonas smithii), this protein is Dynein 14 kDa light chain, flagellar outer arm.